Consider the following 276-residue polypeptide: MPDYAIGDIQGCYDPLQRLLELIDFNEKDDCLWFVGDLVNRGPDSLAVLRFIYSLPVKPKITLGNHDLHLLGLLFGGQPWKGHDDTLEEVMLADDGEELGHWLRKQSLLCRSSELNIVMCHAGIAPLWDLSKAVGLANELEAVLSGDSYHEFFAQMYGNKPDIWSDDLVGLDRLRVITNYFTRMRYCDAHGRLDLGYKGTLSKAPNHLYPWFEVPCRKEIEMDIVFGHWAALMGRSSHPRIHAIDTGCLWGGQLTALRLQDRQRFSVPGYGVSRFE.

Belongs to the Ap4A hydrolase family.

The enzyme catalyses P(1),P(4)-bis(5'-adenosyl) tetraphosphate + H2O = 2 ADP + 2 H(+). Functionally, hydrolyzes diadenosine 5',5'''-P1,P4-tetraphosphate to yield ADP. The polypeptide is Bis(5'-nucleosyl)-tetraphosphatase, symmetrical (Legionella pneumophila (strain Lens)).